The sequence spans 69 residues: Arabinogalactan protein 24 (69 aa).

A signal peptide spans 1–25; it reads MMMMTKMFVQIAVVCLLATMAVVSA. 4 positions are modified to 4-hydroxyproline: Pro34, Pro36, Pro38, and Pro40. O-linked (Ara...) hydroxyproline glycosylation is found at Pro34, Pro36, Pro38, and Pro40. Ser42 carries the GPI-anchor amidated serine lipid modification. Residues 43–69 constitute a propeptide, removed in mature form; that stretch reads SSTVVSATNMFTVLAIAAVALVVGSNH.

It belongs to the AG-peptide AGP family. Contains 4-hydroxyproline; hydroxylated on Pro-34, Pro-36, Pro-38 and Pro-40. In terms of processing, O-glycosylated on hydroxyprolines; noncontiguous hydroxylproline residues are glycosylated with arabinogalactan.

It localises to the cell membrane. Proteoglycan that seems to be implicated in diverse developmental roles such as differentiation, cell-cell recognition, embryogenesis and programmed cell death. The polypeptide is Arabinogalactan protein 24 (Arabidopsis thaliana (Mouse-ear cress)).